A 789-amino-acid chain; its full sequence is Zinc finger protein GLIS1 (789 aa).

Composition is skewed to basic and acidic residues over residues 1–16 (MHCE…RPKE) and 63–74 (RAHDLLRPRSPR). 3 disordered regions span residues 1–29 (MHCE…GPVS), 53–93 (LLPR…YGHS), and 278–304 (PPLP…QEGS). Polar residues predominate over residues 80-92 (KTGSGKVNGSYGH). A C2H2-type 1 zinc finger spans residues 366–391 (QACRWVDCCAAYEQQEELVRHIEKSH). The segment at 400–427 (FTCFWAGCVRRYKPFNARYKLLIHMRVH) adopts a C2H2-type 2; atypical zinc-finger fold. 3 C2H2-type zinc fingers span residues 433-457 (NKCM…LRSH), 463-487 (YLCQ…QRTH), and 493-517 (YACQ…VKAH). 2 disordered regions span residues 506–529 (DPSS…KKLH) and 573–684 (VYPG…QGYQ). The Bipartite nuclear localization signal motif lies at 511–527 (RKHVKAHSAKEQQVRKK). Residues 648–658 (ASQSQSPGGQS) are compositionally biased toward low complexity.

The protein belongs to the GLI C2H2-type zinc-finger protein family. Interacts with KLF4. Interacts with POU5F1 and/or POU5F1B. Interacts with SOX2. In terms of tissue distribution, in the adult, expressed highly in placenta and kidney and at lower levels in the testis, brain, colon, brown fat tissue and thymus. During embryo development, expressed in the frontal nasal region, branchial arches, somites, vibrissal and hair follicles, limb buds, craniofacial regions, ventral part of the tail, intervertebral disks, teeth, eyes and kidney.

Its subcellular location is the nucleus. Functionally, acts both as a repressor and an ctivator of transcription. Binds to the consensus sequence 5'-GACCACCCAC-3'. By controlling the expression of genes involved in cell differentiation inhibits the lineage commitment of multipotent cells. Prevents, for instance, the differentiation of multipotent mesenchymal cells into adipocyte and osteoblast. The polypeptide is Zinc finger protein GLIS1 (Mus musculus (Mouse)).